Here is a 199-residue protein sequence, read N- to C-terminus: Probable GTP-binding protein EngB (199 aa).

An EngB-type G domain is found at 28 to 199 (DLPEIALAGR…DSWDAILEQV (172 aa)). Residues 36–43 (GRSNVGKS), 63–67 (GKTQL), 81–84 (DVPG), 148–151 (TKAD), and 180–182 (FSS) contribute to the GTP site. 2 residues coordinate Mg(2+): serine 43 and threonine 65.

Belongs to the TRAFAC class TrmE-Era-EngA-EngB-Septin-like GTPase superfamily. EngB GTPase family. The cofactor is Mg(2+).

Its function is as follows. Necessary for normal cell division and for the maintenance of normal septation. The sequence is that of Probable GTP-binding protein EngB from Streptococcus pyogenes serotype M6 (strain ATCC BAA-946 / MGAS10394).